Consider the following 215-residue polypeptide: Thymidylate kinase (215 aa).

Residue 11-18 participates in ATP binding; it reads GIDGAGKS.

Belongs to the thymidylate kinase family.

It catalyses the reaction dTMP + ATP = dTDP + ADP. Its function is as follows. Phosphorylation of dTMP to form dTDP in both de novo and salvage pathways of dTTP synthesis. This chain is Thymidylate kinase, found in Nitrosomonas eutropha (strain DSM 101675 / C91 / Nm57).